The chain runs to 226 residues: Lysosomal-associated transmembrane protein 4B (226 aa).

4 consecutive transmembrane segments (helical) span residues 26–46 (ILLG…LLSA), 72–92 (MCIA…ATYG), 100–120 (WIIP…LVAV), and 153–173 (CLVL…GYLI). The segment at 205–221 (PPYDDATVNSATKEPPP) is required for NEDD4 interaction.

The protein belongs to the LAPTM4/LAPTM5 transporter family. Homooligomer; upon reaching the lysosomes. Interacts with MCOLN1. Interacts with NEDD4; may play a role in the lysosomal sorting of LAPTM4B; enhances HGS association with NEDD4; mediates inhibition of EGFR degradation. Interacts with PIP5K1C; promotes SNX5 association with LAPTM4B; kinase activity of PIP5K1C is required; interaction is regulated by phosphatidylinositol 4,5-bisphosphate generated by PIP5K1C. Interacts with HGS; promotes HGS ubiquitination. Interacts with SNX5. Interacts with SLC3A2 and SLC7A5; recruits SLC3A2 and SLC7A5 to lysosomes to promote leucine uptake into these organelles and is required for mTORC1 activation. Interacts with LRRC32; decreases TGFB1 production in regulatory T cells. Interacts with BECN1; competes with EGFR for LAPTM4B binding; regulates EGFR activity. Interacts with EGFR; positively correlates with EGFR activation. Post-translationally, undergoes proteolytic cleavage following delivery to the lysosomes. Ubiquitinated by NEDD4. Strongly expressed in fetal ovary, testis, adrenal gland, liver and uterus, and weakly expressed in the spleen.

The protein resides in the endomembrane system. It is found in the late endosome membrane. The protein localises to the cell membrane. Its subcellular location is the cell projection. It localises to the lysosome membrane. The protein resides in the endosome membrane. It is found in the endosome. The protein localises to the multivesicular body membrane. Its subcellular location is the multivesicular body lumen. Required for optimal lysosomal function. Blocks EGF-stimulated EGFR intraluminal sorting and degradation. Conversely by binding with the phosphatidylinositol 4,5-bisphosphate, regulates its PIP5K1C interaction, inhibits HGS ubiquitination and relieves LAPTM4B inhibition of EGFR degradation. Recruits SLC3A2 and SLC7A5 (the Leu transporter) to the lysosome, promoting entry of leucine and other essential amino acid (EAA) into the lysosome, stimulating activation of proton-transporting vacuolar (V)-ATPase protein pump (V-ATPase) and hence mTORC1 activation. Plays a role as negative regulator of TGFB1 production in regulatory T cells. Binds ceramide and facilitates its exit from late endosome in order to control cell death pathways. The chain is Lysosomal-associated transmembrane protein 4B from Bos taurus (Bovine).